Consider the following 476-residue polypeptide: Ribulose bisphosphate carboxylase large chain (476 aa).

Positions 124 and 174 each coordinate substrate. The active-site Proton acceptor is the lysine 176. A substrate-binding site is contributed by lysine 178. Residues lysine 202, aspartate 204, and glutamate 205 each contribute to the Mg(2+) site. Position 202 is an N6-carboxylysine (lysine 202). Histidine 295 acts as the Proton acceptor in catalysis. 3 residues coordinate substrate: arginine 296, histidine 328, and serine 380.

It belongs to the RuBisCO large chain family. Type I subfamily. Heterohexadecamer of 8 large chains and 8 small chains; disulfide-linked. The disulfide link is formed within the large subunit homodimers. Mg(2+) serves as cofactor. In terms of processing, the disulfide bond which can form in the large chain dimeric partners within the hexadecamer appears to be associated with oxidative stress and protein turnover.

Its subcellular location is the carboxysome. It catalyses the reaction 2 (2R)-3-phosphoglycerate + 2 H(+) = D-ribulose 1,5-bisphosphate + CO2 + H2O. It carries out the reaction D-ribulose 1,5-bisphosphate + O2 = 2-phosphoglycolate + (2R)-3-phosphoglycerate + 2 H(+). Functionally, ruBisCO catalyzes two reactions: the carboxylation of D-ribulose 1,5-bisphosphate, the primary event in carbon dioxide fixation, as well as the oxidative fragmentation of the pentose substrate in the photorespiration process. Both reactions occur simultaneously and in competition at the same active site. The sequence is that of Ribulose bisphosphate carboxylase large chain from Cyanothece sp. (strain PCC 7425 / ATCC 29141).